The primary structure comprises 284 residues: 2-dehydro-3-deoxyphosphooctonate aldolase (284 aa).

It belongs to the KdsA family.

It localises to the cytoplasm. The catalysed reaction is D-arabinose 5-phosphate + phosphoenolpyruvate + H2O = 3-deoxy-alpha-D-manno-2-octulosonate-8-phosphate + phosphate. It functions in the pathway carbohydrate biosynthesis; 3-deoxy-D-manno-octulosonate biosynthesis; 3-deoxy-D-manno-octulosonate from D-ribulose 5-phosphate: step 2/3. Its pathway is bacterial outer membrane biogenesis; lipopolysaccharide biosynthesis. In Salmonella arizonae (strain ATCC BAA-731 / CDC346-86 / RSK2980), this protein is 2-dehydro-3-deoxyphosphooctonate aldolase.